We begin with the raw amino-acid sequence, 349 residues long: FK506-binding protein-like (349 aa).

Residue T3 is modified to Phosphothreonine. The tract at residues 36–55 (RQQPRDPPTETLELEVSPDP) is disordered. 3 TPR repeats span residues 210–243 (AREERARGTELFRAGNPEGAARCYGRALRLLLTL), 252–285 (TVLHANLAACQLLLGQPQLAAQSCDRVLEREPGH), and 286–319 (LKALYRRGVAQAALGNLEKATADLKKVLAIDPKN).

As to quaternary structure, forms a ternary complex with CDKN1A/p21 and HSP90AB1/Hsp90. In terms of tissue distribution, ubiquitously expressed with higher levels in testis.

Functionally, may be involved in response to X-ray. Regulates p21 protein stability by binding to Hsp90 and p21. This is FK506-binding protein-like (FKBPL) from Homo sapiens (Human).